Consider the following 349-residue polypeptide: Transcriptional repressor protein KorB (349 aa).

Disordered stretches follow at residues 1–72 (MSAK…SPES) and 246–296 (RSHD…DKLK). Over residues 25 to 40 (LGDLAGLLNEQPAANA) the composition is skewed to low complexity. 2 stretches are compositionally biased toward basic and acidic residues: residues 246 to 256 (RSHDDGDRDPN) and 279 to 296 (DDAK…DKLK).

Belongs to the ParB family.

In conjunction with KorA, inhibits the transcription of the kilA, trfA and korAB operons. Is also involved in the negative control of the kilB operon. This chain is Transcriptional repressor protein KorB (korB), found in Escherichia coli.